Reading from the N-terminus, the 118-residue chain is RxLR effector protein PITG_19617 (118 aa).

Residues Met1 to Ala21 form the signal peptide. A RxLR-dEER motif is present at residues Arg50–Glu64.

The protein belongs to the RxLR effector family.

The protein resides in the secreted. It localises to the host nucleus. It is found in the host cytoplasm. In terms of biological role, effector that enhances P.infestans colonization of Nicotiana benthamiana leaves. The chain is RxLR effector protein PITG_19617 from Phytophthora infestans (strain T30-4) (Potato late blight agent).